We begin with the raw amino-acid sequence, 485 residues long: Cytosol non-specific dipeptidase (485 aa).

Residue His-76 coordinates Zn(2+). Residue Asp-78 is part of the active site. A Zn(2+)-binding site is contributed by Asp-115. Glu-145 serves as the catalytic Proton acceptor. Zn(2+) contacts are provided by Glu-146 and Asp-169. Lys-296 bears the N6-acetyllysine mark. His-457 is a Zn(2+) binding site.

Belongs to the peptidase M20C family. It depends on Zn(2+) as a cofactor. Co(2+) is required as a cofactor.

The enzyme catalyses Hydrolysis of dipeptides, preferentially hydrophobic dipeptides including prolyl amino acids.. Inhibited by metal chelators. Its function is as follows. Dipeptidase with broad substrate specificity. Requires dipeptide substrates with an unblocked N-terminus and the amino group in the alpha or beta position. Non-protein amino acids and proline are not accepted in the C-terminal position, whereas some dipeptide amides and formyl amino acids are hydrolyzed. Also shows cysteinylglycinase activity, which is sufficient for E.coli to utilize cysteinylglycine as a cysteine source. This Escherichia coli (strain K12) protein is Cytosol non-specific dipeptidase (pepD).